The primary structure comprises 131 residues: Small ribosomal subunit protein uS11 (131 aa).

The protein belongs to the universal ribosomal protein uS11 family. As to quaternary structure, part of the 30S ribosomal subunit. Interacts with proteins S7 and S18. Binds to IF-3.

Located on the platform of the 30S subunit, it bridges several disparate RNA helices of the 16S rRNA. Forms part of the Shine-Dalgarno cleft in the 70S ribosome. The polypeptide is Small ribosomal subunit protein uS11 (Wigglesworthia glossinidia brevipalpis).